A 123-amino-acid chain; its full sequence is Small ribosomal subunit protein uS13 (123 aa).

The tract at residues 95-123 is disordered; that stretch reads GLPVRGQKTKTNARTRKGPKKAVASKKKK.

It belongs to the universal ribosomal protein uS13 family. In terms of assembly, part of the 30S ribosomal subunit. Forms a loose heterodimer with protein S19. Forms two bridges to the 50S subunit in the 70S ribosome.

Functionally, located at the top of the head of the 30S subunit, it contacts several helices of the 16S rRNA. In the 70S ribosome it contacts the 23S rRNA (bridge B1a) and protein L5 of the 50S subunit (bridge B1b), connecting the 2 subunits; these bridges are implicated in subunit movement. Contacts the tRNAs in the A and P-sites. In Clostridium acetobutylicum (strain ATCC 824 / DSM 792 / JCM 1419 / IAM 19013 / LMG 5710 / NBRC 13948 / NRRL B-527 / VKM B-1787 / 2291 / W), this protein is Small ribosomal subunit protein uS13.